Consider the following 428-residue polypeptide: Histidine--tRNA ligase (428 aa).

It belongs to the class-II aminoacyl-tRNA synthetase family. As to quaternary structure, homodimer.

It is found in the cytoplasm. The enzyme catalyses tRNA(His) + L-histidine + ATP = L-histidyl-tRNA(His) + AMP + diphosphate + H(+). This Sorangium cellulosum (strain So ce56) (Polyangium cellulosum (strain So ce56)) protein is Histidine--tRNA ligase.